The sequence spans 205 residues: CMRF35-like molecule 2 (205 aa).

An N-terminal signal peptide occupies residues 1-17 (MWLLPALLLLCLSGCLS). Positions 18 to 120 (LKGPGSVTGT…VLDSWSRDPS (103 aa)) constitute an Ig-like V-type domain. Residues 18–173 (LKGPGSVTGT…NSGFRLSSPH (156 aa)) are Extracellular-facing. Cys36 and Cys104 are joined by a disulfide. Residue Asn154 is glycosylated (N-linked (GlcNAc...) asparagine). A helical transmembrane segment spans residues 174–194 (FLLVVLLKLPLLLSMLGAVFW). Topologically, residues 195–205 (VNRPQWAPPGR) are cytoplasmic.

The protein belongs to the CD300 family. In terms of assembly, interacts with TYROBP. In terms of processing, N-glycosylated. Present on the surface of mature hematopoietic cells of the monocyte and myeloid lineages (at protein level).

Its subcellular location is the cell membrane. Its function is as follows. Probably acts as an activating receptor. The sequence is that of CMRF35-like molecule 2 (CD300E) from Homo sapiens (Human).